A 231-amino-acid polypeptide reads, in one-letter code: ATP-dependent dethiobiotin synthetase BioD 2 (231 aa).

13–18 is a binding site for ATP; that stretch reads SVGKTV. Thr17 serves as a coordination point for Mg(2+). The active site involves Lys38. Residues Asp55, 112-115, 172-173, 201-203, and Gln208 each bind ATP; these read EGTG, NR, and PYL. The Mg(2+) site is built by Asp55 and Glu112.

The protein belongs to the dethiobiotin synthetase family. As to quaternary structure, homodimer. Mg(2+) serves as cofactor.

It is found in the cytoplasm. It catalyses the reaction (7R,8S)-7,8-diammoniononanoate + CO2 + ATP = (4R,5S)-dethiobiotin + ADP + phosphate + 3 H(+). The protein operates within cofactor biosynthesis; biotin biosynthesis; biotin from 7,8-diaminononanoate: step 1/2. Functionally, catalyzes a mechanistically unusual reaction, the ATP-dependent insertion of CO2 between the N7 and N8 nitrogen atoms of 7,8-diaminopelargonic acid (DAPA, also called 7,8-diammoniononanoate) to form a ureido ring. The sequence is that of ATP-dependent dethiobiotin synthetase BioD 2 from Salmonella typhi.